Reading from the N-terminus, the 334-residue chain is Ferric enterobactin transport system permease protein FepD (334 aa).

Residues 1-9 are Periplasmic-facing; sequence MSGSVAVTR. A helical membrane pass occupies residues 10–30; it reads AIAVPGLLLLLIIATALSLLI. Residues 31–63 lie on the Cytoplasmic side of the membrane; the sequence is GAKSLPASVVLEAFSGTCQSADCTIVLDARLPR. The chain crosses the membrane as a helical span at residues 64–84; that stretch reads TLAGLLAGGALGLAGALMQTL. The Periplasmic portion of the chain corresponds to 85–92; that stretch reads TRNPLADP. The chain crosses the membrane as a helical span at residues 93–113; the sequence is GLLGVNAGASFAIVLGAALFG. Residues 114–120 lie on the Cytoplasmic side of the membrane; the sequence is YSSAQEQ. A helical transmembrane segment spans residues 121 to 141; the sequence is LAMAFAGALVASLIVAFTGSQ. The Periplasmic segment spans residues 142-151; it reads GGGQLSPVRL. A helical transmembrane segment spans residues 152–172; that stretch reads TLAGVALAAVLEGLTSGIALL. Over 173 to 192 the chain is Cytoplasmic; it reads NPDVYDQLRFWQAGSLDIRN. The helical transmembrane segment at 193-213 threads the bilayer; it reads LHTLKVVLIPVLIAGATALLL. The Periplasmic portion of the chain corresponds to 214 to 241; it reads SRALNSLSLGSDTATALGSRVARTQLIG. Residues 242 to 262 traverse the membrane as a helical segment; the sequence is LLAITVLCGSATAIVGPIAFI. The Cytoplasmic segment spans residues 263-279; sequence GLMMPHMARWLVGADHR. Residues 280-300 form a helical membrane-spanning segment; the sequence is WSLPVTLLATPALLLFADIIG. The Periplasmic portion of the chain corresponds to 301–305; sequence RVIVP. The helical transmembrane segment at 306-326 threads the bilayer; it reads GELRVSVVSAFIGAPVLIFLV. Topologically, residues 327–334 are cytoplasmic; sequence RRKTRGGA.

It belongs to the binding-protein-dependent transport system permease family. FecCD subfamily. In terms of assembly, the complex is composed of two ATP-binding proteins (FepC), two transmembrane proteins (FepD and FepG) and a solute-binding protein (FepB).

It localises to the cell inner membrane. Functionally, part of the ABC transporter complex FepBDGC involved in ferric enterobactin uptake. Responsible for the translocation of the substrate across the membrane. This chain is Ferric enterobactin transport system permease protein FepD (fepD), found in Escherichia coli (strain K12).